The sequence spans 422 residues: Tyrosine--tRNA ligase (422 aa).

Tyr37 serves as a coordination point for L-tyrosine. Positions 42–51 (PTEESLHIGH) match the 'HIGH' region motif. 2 residues coordinate L-tyrosine: Tyr175 and Gln179. Positions 235-239 (KFGKT) match the 'KMSKS' region motif. Residue Lys238 coordinates ATP. Residues 357-414 (KDLQEALVLTSLAQSRTQAKNMIISNSISINTEKIRKNHIFHEKDKLFGKFTLLSRGK) form the S4 RNA-binding domain.

The protein belongs to the class-I aminoacyl-tRNA synthetase family. TyrS type 1 subfamily. Homodimer.

The protein resides in the cytoplasm. It carries out the reaction tRNA(Tyr) + L-tyrosine + ATP = L-tyrosyl-tRNA(Tyr) + AMP + diphosphate + H(+). Functionally, catalyzes the attachment of tyrosine to tRNA(Tyr) in a two-step reaction: tyrosine is first activated by ATP to form Tyr-AMP and then transferred to the acceptor end of tRNA(Tyr). This Buchnera aphidicola subsp. Acyrthosiphon pisum (strain Tuc7) protein is Tyrosine--tRNA ligase.